The chain runs to 193 residues: Holliday junction branch migration complex subunit RuvA (193 aa).

The segment at 1–64 (MIGRIAGILL…EDANLLYGFL (64 aa)) is domain I. Positions 65–139 (TPQERTTFRE…GKLGADLGEL (75 aa)) are domain II. Residues 139–143 (LAGAA) are flexible linker. Positions 144–193 (SPSDHATDILNALLALGYSEKEGLAAIKNVPAGTGVSEGIKLALKALSKV) are domain III.

The protein belongs to the RuvA family. Homotetramer. Forms an RuvA(8)-RuvB(12)-Holliday junction (HJ) complex. HJ DNA is sandwiched between 2 RuvA tetramers; dsDNA enters through RuvA and exits via RuvB. An RuvB hexamer assembles on each DNA strand where it exits the tetramer. Each RuvB hexamer is contacted by two RuvA subunits (via domain III) on 2 adjacent RuvB subunits; this complex drives branch migration. In the full resolvosome a probable DNA-RuvA(4)-RuvB(12)-RuvC(2) complex forms which resolves the HJ.

The protein localises to the cytoplasm. Functionally, the RuvA-RuvB-RuvC complex processes Holliday junction (HJ) DNA during genetic recombination and DNA repair, while the RuvA-RuvB complex plays an important role in the rescue of blocked DNA replication forks via replication fork reversal (RFR). RuvA specifically binds to HJ cruciform DNA, conferring on it an open structure. The RuvB hexamer acts as an ATP-dependent pump, pulling dsDNA into and through the RuvAB complex. HJ branch migration allows RuvC to scan DNA until it finds its consensus sequence, where it cleaves and resolves the cruciform DNA. This chain is Holliday junction branch migration complex subunit RuvA, found in Burkholderia lata (strain ATCC 17760 / DSM 23089 / LMG 22485 / NCIMB 9086 / R18194 / 383).